The following is a 201-amino-acid chain: 3-isopropylmalate dehydratase small subunit (201 aa).

It belongs to the LeuD family. LeuD type 1 subfamily. As to quaternary structure, heterodimer of LeuC and LeuD.

The enzyme catalyses (2R,3S)-3-isopropylmalate = (2S)-2-isopropylmalate. Its pathway is amino-acid biosynthesis; L-leucine biosynthesis; L-leucine from 3-methyl-2-oxobutanoate: step 2/4. Catalyzes the isomerization between 2-isopropylmalate and 3-isopropylmalate, via the formation of 2-isopropylmaleate. This is 3-isopropylmalate dehydratase small subunit from Chloroflexus aurantiacus (strain ATCC 29366 / DSM 635 / J-10-fl).